The following is a 229-amino-acid chain: Large ribosomal subunit protein uL1 (229 aa).

This sequence belongs to the universal ribosomal protein uL1 family. Part of the 50S ribosomal subunit.

Binds directly to 23S rRNA. The L1 stalk is quite mobile in the ribosome, and is involved in E site tRNA release. In terms of biological role, protein L1 is also a translational repressor protein, it controls the translation of the L11 operon by binding to its mRNA. This chain is Large ribosomal subunit protein uL1, found in Streptococcus pneumoniae (strain Taiwan19F-14).